Consider the following 584-residue polypeptide: MASVQASRRQWCYLCDLPKMPWAMVWDFSEAVCRGCVNFEGADRIELLIDAARQLKRSHVLPEGRSPGPPALKHPATKDLAAAAAQGPQLPPPQAQPQPSGTGGGVSGQDRYDRATSSGRLPLPSPALEYTLGSRLANGLGREEAVAEGARRALLGSMPGLMPPGLLAAAVSGLGSRGLTLAPGLSPARPLFGSDFEKEKQQRNADCLAELNEAMRGRAEEWHGRPKAVREQLLALSACAPFNVRFKKDHGLVGRVFAFDATARPPGYEFELKLFTEYPCGSGNVYAGVLAVARQMFHDALREPGKALASSGFKYLEYERRHGSGEWRQLGELLTDGVRSFREPAPAEALPQQYPEPAPAALCGPPPRAPSRNLAPTPRRRKASPEPEGEAAGKMTTEEQQQRHWVAPGGPYSAETPGVPSPIAALKNVAEALGHSPKDPGGGGGPVRAGGASPAASSTAQPPTQHRLVARNGEAEVSPTAGAEAVSGGGSGTGATPGAPLCCTLCRERLEDTHFVQCPSVPGHKFCFPCSREFIKAQGPAGEVYCPSGDKCPLVGSSVPWAFMQGEIATILAGDIKVKKERDP.

The disordered stretch occupies residues 60 to 127; it reads VLPEGRSPGP…SGRLPLPSPA (68 aa). 2 positions are modified to phosphoserine: serine 66 and serine 125. The residue at position 177 (arginine 177) is an Omega-N-methylarginine. Residue serine 186 is modified to Phosphoserine. Positions 197–217 form a coiled coil; the sequence is EKEKQQRNADCLAELNEAMRG. Residue lysine 227 forms a Glycyl lysine isopeptide (Lys-Gly) (interchain with G-Cter in SUMO2) linkage. The segment at 346–420 is disordered; sequence PAEALPQQYP…PYSAETPGVP (75 aa). The segment covering 354 to 369 has biased composition (pro residues); the sequence is YPEPAPAALCGPPPRA. Phosphoserine occurs at positions 371, 384, 421, and 436. The tract at residues 433–495 is disordered; sequence LGHSPKDPGG…VSGGGSGTGA (63 aa). A Glycyl lysine isopeptide (Lys-Gly) (interchain with G-Cter in SUMO2) cross-link involves residue lysine 438. The segment covering 449–463 has biased composition (low complexity); it reads AGGASPAASSTAQPP. 2 positions are modified to phosphoserine: serine 453 and serine 457. The RING-type; degenerate zinc-finger motif lies at 503–550; it reads CTLCRERLEDTHFVQCPSVPGHKFCFPCSREFIKAQGPAGEVYCPSGD. Residues 503-550 are cys-rich; the sequence is CTLCRERLEDTHFVQCPSVPGHKFCFPCSREFIKAQGPAGEVYCPSGD.

The protein belongs to the IRF2BP family. As to quaternary structure, interacts with IRF2. Part of a corepressor complex containing IRF2 and IRF2BP2. Interacts with JDP2.

The protein localises to the nucleus. The enzyme catalyses S-ubiquitinyl-[E2 ubiquitin-conjugating enzyme]-L-cysteine + [acceptor protein]-L-lysine = [E2 ubiquitin-conjugating enzyme]-L-cysteine + N(6)-ubiquitinyl-[acceptor protein]-L-lysine.. Acts as a transcriptional corepressor in a IRF2-dependent manner; this repression is not mediated by histone deacetylase activities. May act as an E3 ligase towards JDP2, enhancing its polyubiquitination. Represses ATF2-dependent transcriptional activation. This is Interferon regulatory factor 2-binding protein 1 (IRF2BP1) from Homo sapiens (Human).